Consider the following 152-residue polypeptide: Aspartate carbamoyltransferase regulatory chain (152 aa).

Zn(2+) contacts are provided by C108, C113, C137, and C140.

This sequence belongs to the PyrI family. Contains catalytic and regulatory chains. Requires Zn(2+) as cofactor.

Its function is as follows. Involved in allosteric regulation of aspartate carbamoyltransferase. This is Aspartate carbamoyltransferase regulatory chain from Neisseria meningitidis serogroup B (strain ATCC BAA-335 / MC58).